Reading from the N-terminus, the 412-residue chain is Glutamate-1-semialdehyde 2,1-aminomutase (412 aa).

Position 260 is an N6-(pyridoxal phosphate)lysine (lysine 260).

This sequence belongs to the class-III pyridoxal-phosphate-dependent aminotransferase family. HemL subfamily. It depends on pyridoxal 5'-phosphate as a cofactor.

Its subcellular location is the cytoplasm. It carries out the reaction (S)-4-amino-5-oxopentanoate = 5-aminolevulinate. Its pathway is porphyrin-containing compound metabolism; protoporphyrin-IX biosynthesis; 5-aminolevulinate from L-glutamyl-tRNA(Glu): step 2/2. The sequence is that of Glutamate-1-semialdehyde 2,1-aminomutase from Methanocorpusculum labreanum (strain ATCC 43576 / DSM 4855 / Z).